A 318-amino-acid polypeptide reads, in one-letter code: 2-keto-3-deoxygluconate permease (318 aa).

10 helical membrane-spanning segments follow: residues 10–30 (IPGGLMLVPLFLGAFCNTFTP), 42–62 (GLITGTIPILAVWFFCMGASI), 76–96 (VLVVTKLATAWVVAMIAGAFL), 105–125 (LLAGISVLALVAAMDMTNGGL), 139–159 (AGAFVLMSLESGPLMTMVILG), 162–182 (GIATFEPQLFVGAVLPFLIGF), 199–219 (VQTLIPFFAFALGNTINLSVI), 224–244 (FAGIFLGVLVIIVTGIPLILA), 254–274 (TAGIAASSSAGAAVATPLLIA), and 289–309 (ALVATSVIVTSVLVPIITALW).

It belongs to the KdgT transporter family.

Its subcellular location is the cell inner membrane. The enzyme catalyses 2-dehydro-3-deoxy-D-gluconate(in) + H(+)(in) = 2-dehydro-3-deoxy-D-gluconate(out) + H(+)(out). Its function is as follows. Catalyzes the proton-dependent uptake of 2-keto-3-deoxygluconate (KDG) into the cell. The protein is 2-keto-3-deoxygluconate permease of Pectobacterium atrosepticum (strain SCRI 1043 / ATCC BAA-672) (Erwinia carotovora subsp. atroseptica).